A 258-amino-acid polypeptide reads, in one-letter code: Shikimate dehydrogenase (NADP(+)) (258 aa).

Shikimate-binding positions include 14-16 (SES) and Thr-61. Lys-65 functions as the Proton acceptor in the catalytic mechanism. 2 residues coordinate shikimate: Asn-86 and Asp-101. NADP(+)-binding positions include 125-129 (GSGGS) and Leu-211. Shikimate is bound at residue Tyr-213. Gly-234 provides a ligand contact to NADP(+).

This sequence belongs to the shikimate dehydrogenase family. As to quaternary structure, homodimer.

The catalysed reaction is shikimate + NADP(+) = 3-dehydroshikimate + NADPH + H(+). Its pathway is metabolic intermediate biosynthesis; chorismate biosynthesis; chorismate from D-erythrose 4-phosphate and phosphoenolpyruvate: step 4/7. Its function is as follows. Involved in the biosynthesis of the chorismate, which leads to the biosynthesis of aromatic amino acids. Catalyzes the reversible NADPH linked reduction of 3-dehydroshikimate (DHSA) to yield shikimate (SA). The sequence is that of Shikimate dehydrogenase (NADP(+)) from Clostridium botulinum (strain 657 / Type Ba4).